We begin with the raw amino-acid sequence, 577 residues long: Sulfite reductase [NADPH] hemoprotein beta-component 2 (577 aa).

[4Fe-4S] cluster is bound by residues C441, C447, C486, and C490. C490 contacts siroheme.

Belongs to the nitrite and sulfite reductase 4Fe-4S domain family. As to quaternary structure, alpha(8)-beta(8). The alpha component is a flavoprotein, the beta component is a hemoprotein. Siroheme serves as cofactor. The cofactor is [4Fe-4S] cluster.

It catalyses the reaction hydrogen sulfide + 3 NADP(+) + 3 H2O = sulfite + 3 NADPH + 4 H(+). It functions in the pathway sulfur metabolism; hydrogen sulfide biosynthesis; hydrogen sulfide from sulfite (NADPH route): step 1/1. Functionally, component of the sulfite reductase complex that catalyzes the 6-electron reduction of sulfite to sulfide. This is one of several activities required for the biosynthesis of L-cysteine from sulfate. The protein is Sulfite reductase [NADPH] hemoprotein beta-component 2 of Pectobacterium carotovorum subsp. carotovorum (strain PC1).